A 192-amino-acid chain; its full sequence is Cytidylate kinase (192 aa).

7–15 (GPPGSGKST) contributes to the ATP binding site.

It belongs to the cytidylate kinase family. Type 2 subfamily.

Its subcellular location is the cytoplasm. It catalyses the reaction CMP + ATP = CDP + ADP. It carries out the reaction dCMP + ATP = dCDP + ADP. This Halobacterium salinarum (strain ATCC 29341 / DSM 671 / R1) protein is Cytidylate kinase.